Here is a 452-residue protein sequence, read N- to C-terminus: Bifunctional F420 biosynthesis protein FbiB (452 aa).

Positions 1 to 248 (MVSAPGDHAG…AGEEDLFWLG (248 aa)) are coenzyme F420:L-glutamate ligase. GTP-binding positions include 24-27 (LPEF), Ser54, and Lys59. A divalent metal cation is bound at residue Asp113. Position 116 (Asn116) interacts with GTP. Asp154 and Thr155 together coordinate a divalent metal cation. The segment at 249-452 (TAEAVERGRR…RDPGDGLVER (204 aa)) is dehydro-coenzyme F420-0 reductase. FMN-binding positions include 264-268 (RRSVR) and Ala292. A coenzyme F420-(gamma-Glu)n-binding site is contributed by Asp324. The FMN site is built by Gly403 and Arg440.

The protein in the N-terminal section; belongs to the CofE family. Mg(2+) serves as cofactor. Mn(2+) is required as a cofactor. The cofactor is K(+).

The catalysed reaction is oxidized coenzyme F420-0 + GTP + L-glutamate = oxidized coenzyme F420-1 + GDP + phosphate + H(+). The enzyme catalyses oxidized coenzyme F420-0 + FMN + H(+) = dehydro coenzyme F420-0 + FMNH2. It carries out the reaction oxidized coenzyme F420-1 + GTP + L-glutamate = oxidized coenzyme F420-2 + GDP + phosphate + H(+). The protein operates within cofactor biosynthesis; coenzyme F420 biosynthesis. Bifunctional enzyme that catalyzes the GTP-dependent successive addition of two or more gamma-linked L-glutamates to the L-lactyl phosphodiester of 7,8-didemethyl-8-hydroxy-5-deazariboflavin (F420-0) to form polyglutamated F420 derivatives, and the FMNH2-dependent reduction of dehydro-F420-0 to form F420-0. In Nocardia farcinica (strain IFM 10152), this protein is Bifunctional F420 biosynthesis protein FbiB.